The chain runs to 439 residues: uncharacterized protein (439 aa).

A YcaO domain is found at 116–439 (GKAASYRAAQ…PMRTPLQEAE (324 aa)).

This is an uncharacterized protein from Mycobacterium tuberculosis (strain CDC 1551 / Oshkosh).